Reading from the N-terminus, the 473-residue chain is Photosystem II CP43 reaction center protein (473 aa).

Positions 1–14 (MKILYSQRRFYHVE) are excised as a propeptide. The next 5 helical transmembrane spans lie at 69-93 (LFEV…PHLA), 134-155 (LIGP…RDKN), 178-200 (KAMF…RYIN), 255-275 (KPFG…LSYS), and 291-312 (WYNN…ASQA). Residue Glu-367 coordinates [CaMn4O5] cluster. A helical membrane pass occupies residues 447–471 (RARAAAAGFEKGINRENEPVLSMKL).

The protein belongs to the PsbB/PsbC family. PsbC subfamily. As to quaternary structure, PSII is composed of 1 copy each of membrane proteins PsbA, PsbB, PsbC, PsbD, PsbE, PsbF, PsbH, PsbI, PsbJ, PsbK, PsbL, PsbM, PsbT, PsbY, PsbZ, Psb30/Ycf12, at least 3 peripheral proteins of the oxygen-evolving complex and a large number of cofactors. It forms dimeric complexes. Binds multiple chlorophylls and provides some of the ligands for the Ca-4Mn-5O cluster of the oxygen-evolving complex. It may also provide a ligand for a Cl- that is required for oxygen evolution. PSII binds additional chlorophylls, carotenoids and specific lipids. is required as a cofactor.

The protein localises to the plastid. The protein resides in the chloroplast thylakoid membrane. In terms of biological role, one of the components of the core complex of photosystem II (PSII). It binds chlorophyll and helps catalyze the primary light-induced photochemical processes of PSII. PSII is a light-driven water:plastoquinone oxidoreductase, using light energy to abstract electrons from H(2)O, generating O(2) and a proton gradient subsequently used for ATP formation. In Galdieria sulphuraria (Red alga), this protein is Photosystem II CP43 reaction center protein.